A 588-amino-acid chain; its full sequence is Protein POF1B (588 aa).

Coiled coils occupy residues 332-442 (STFS…VSET) and 502-530 (LHELTSLLEEKDSLIKRQSEELSKLRQEI).

As to quaternary structure, interacts with nonmuscle actin.

The protein localises to the cell junction. Its subcellular location is the tight junction. Its function is as follows. Plays a key role in the organization of epithelial monolayers by regulating the actin cytoskeleton. May be involved in ovary development. In Pongo abelii (Sumatran orangutan), this protein is Protein POF1B (POF1B).